Reading from the N-terminus, the 600-residue chain is Probable methyltransferase PMT7 (600 aa).

Residues 1–15 (MGGGYVLFGSARSGQ) lie on the Cytoplasmic side of the membrane. Residues 16–36 (MIMVALVLMVGSFYAGSIFGN) traverse the membrane as a helical; Signal-anchor for type II membrane protein segment. The Lumenal portion of the chain corresponds to 37–600 (NSPIYISQPS…FCRKKFWAIL (564 aa)). Residues asparagine 49, asparagine 98, asparagine 110, asparagine 157, asparagine 200, asparagine 204, asparagine 334, asparagine 447, and asparagine 484 are each glycosylated (N-linked (GlcNAc...) asparagine).

The protein belongs to the methyltransferase superfamily.

The protein localises to the golgi apparatus membrane. This is Probable methyltransferase PMT7 from Arabidopsis thaliana (Mouse-ear cress).